The chain runs to 116 residues: Large ribosomal subunit protein bL17 (116 aa).

It belongs to the bacterial ribosomal protein bL17 family. As to quaternary structure, part of the 50S ribosomal subunit. Contacts protein L32.

This chain is Large ribosomal subunit protein bL17, found in Synechococcus sp. (strain CC9311).